Reading from the N-terminus, the 408-residue chain is Dual-specificity RNA methyltransferase RlmN (408 aa).

The Proton acceptor role is filled by Glu126. Positions 132–373 constitute a Radical SAM core domain; sequence EEGRGTLCLS…NQAGYASPIR (242 aa). The cysteines at positions 139 and 384 are disulfide-linked. Residues Cys146, Cys150, and Cys153 each contribute to the [4Fe-4S] cluster site. Residues 210-211, Ser242, 264-266, and Asn341 contribute to the S-adenosyl-L-methionine site; these read GE and SLH. Cys384 functions as the S-methylcysteine intermediate in the catalytic mechanism.

Belongs to the radical SAM superfamily. RlmN family. [4Fe-4S] cluster serves as cofactor.

The protein resides in the cytoplasm. It catalyses the reaction adenosine(2503) in 23S rRNA + 2 reduced [2Fe-2S]-[ferredoxin] + 2 S-adenosyl-L-methionine = 2-methyladenosine(2503) in 23S rRNA + 5'-deoxyadenosine + L-methionine + 2 oxidized [2Fe-2S]-[ferredoxin] + S-adenosyl-L-homocysteine. The enzyme catalyses adenosine(37) in tRNA + 2 reduced [2Fe-2S]-[ferredoxin] + 2 S-adenosyl-L-methionine = 2-methyladenosine(37) in tRNA + 5'-deoxyadenosine + L-methionine + 2 oxidized [2Fe-2S]-[ferredoxin] + S-adenosyl-L-homocysteine. Specifically methylates position 2 of adenine 2503 in 23S rRNA and position 2 of adenine 37 in tRNAs. m2A2503 modification seems to play a crucial role in the proofreading step occurring at the peptidyl transferase center and thus would serve to optimize ribosomal fidelity. This chain is Dual-specificity RNA methyltransferase RlmN, found in Bartonella henselae (strain ATCC 49882 / DSM 28221 / CCUG 30454 / Houston 1) (Rochalimaea henselae).